Reading from the N-terminus, the 233-residue chain is Zinc import ATP-binding protein ZnuC (233 aa).

Residues 6–222 (IEFRNVSKKF…SEFSNALSAL (217 aa)) form the ABC transporter domain. 38–45 (GPNGAGKT) is a binding site for ATP.

It belongs to the ABC transporter superfamily. Zinc importer (TC 3.A.1.15.5) family. In terms of assembly, the complex is composed of two ATP-binding proteins (ZnuC), two transmembrane proteins (ZnuB) and a solute-binding protein (ZnuA).

The protein localises to the cell inner membrane. It catalyses the reaction Zn(2+)(out) + ATP(in) + H2O(in) = Zn(2+)(in) + ADP(in) + phosphate(in) + H(+)(in). Part of the ABC transporter complex ZnuABC involved in zinc import. Responsible for energy coupling to the transport system. The protein is Zinc import ATP-binding protein ZnuC of Rickettsia conorii (strain ATCC VR-613 / Malish 7).